The chain runs to 797 residues: Leucine-rich repeat-containing protein AAC1 (797 aa).

Basic and acidic residues predominate over residues 1 to 12 (MKRTSNRNEEAT). Disordered stretches follow at residues 1 to 20 (MKRT…SSTT), 51 to 103 (YSLF…TTTT), 125 to 148 (NLPT…TTTT), and 307 to 333 (HSTS…TITA). Positions 55–81 (NEPNNDNDTNSSTRPNKQQKLLKSNES) are enriched in polar residues. Low complexity predominate over residues 82–103 (TTSTTTTTTPITTTTTTTTTTT). Residues 313-326 (SSPPPPPPPPPPQI) show a composition bias toward pro residues. LRR repeat units lie at residues 376-397 (KLKK…DFFS), 406-425 (TLET…QLLS), 435-456 (VLKR…YLNK), 464-484 (QLET…IMMK), 492-513 (SLKE…DFGK), 514-535 (SITS…KGLS), 543-564 (SITS…KSLS), 572-593 (TLKF…DHLV), 601-622 (SIHS…TLSQ), and 633-653 (PFKY…KKLI).

The sequence is that of Leucine-rich repeat-containing protein AAC1 (AAC1) from Dictyostelium discoideum (Social amoeba).